A 146-amino-acid chain; its full sequence is Bacterial hemoglobin (146 aa).

The region spanning 1–138 (MLDQQTINII…IADVFIQVEA (138 aa)) is the Globin domain. 2 residues coordinate heme b: Gln-53 and His-85.

It belongs to the globin family. Homodimer.

In terms of biological role, this protein functions as a terminal oxidase. This is Bacterial hemoglobin (vhb) from Vitreoscilla stercoraria.